Consider the following 420-residue polypeptide: Transmembrane protease serine 11B-like protein (420 aa).

At 1-19 (MTVSKLRPVIASRKSFPPW) the chain is on the cytoplasmic side. A helical; Signal-anchor for type II membrane protein membrane pass occupies residues 20–40 (MIILGVLGVLAILGLIIGLLV). Topologically, residues 41-420 (HFLAVENKIY…RDWIASKTGI (380 aa)) are extracellular. Positions 48-165 (KIYYYQGSFK…GSLKLTEITK (118 aa)) constitute an SEA domain. N-linked (GlcNAc...) asparagine glycosylation is found at asparagine 111 and asparagine 146. In terms of domain architecture, Peptidase S1 spans 189–419 (ITGGSTAQKG…YRDWIASKTG (231 aa)). Cysteine 214 and cysteine 230 are oxidised to a cystine. The active-site Charge relay system is the histidine 229. A glycan (N-linked (GlcNAc...) asparagine) is linked at asparagine 239. Residue aspartate 274 is the Charge relay system of the active site. Intrachain disulfides connect cysteine 339–cysteine 355 and cysteine 366–cysteine 395. The Charge relay system role is filled by serine 370.

It belongs to the peptidase S1 family.

It localises to the membrane. Its subcellular location is the cell membrane. Inhibited by aprotinin, leupeptin, benzamidine, SERPINA1, SPINT1 and SPINT2. Serine protease. The chain is Transmembrane protease serine 11B-like protein (Tmprss11bnl) from Rattus norvegicus (Rat).